The following is a 314-amino-acid chain: Putative lipoprotein LppW (314 aa).

The first 22 residues, 1-22 (MRARPLTLLTALAAVTLVVVAG), serve as a signal peptide directing secretion. Cysteine 23 carries the N-palmitoyl cysteine lipid modification. Residue cysteine 23 is the site of S-diacylglycerol cysteine attachment.

Its subcellular location is the cell membrane. This Mycobacterium bovis (strain ATCC BAA-935 / AF2122/97) protein is Putative lipoprotein LppW (lppW).